The primary structure comprises 315 residues: Methionyl-tRNA formyltransferase (315 aa).

(6S)-5,6,7,8-tetrahydrofolate is bound at residue S111 to P114.

Belongs to the Fmt family.

It catalyses the reaction L-methionyl-tRNA(fMet) + (6R)-10-formyltetrahydrofolate = N-formyl-L-methionyl-tRNA(fMet) + (6S)-5,6,7,8-tetrahydrofolate + H(+). In terms of biological role, attaches a formyl group to the free amino group of methionyl-tRNA(fMet). The formyl group appears to play a dual role in the initiator identity of N-formylmethionyl-tRNA by promoting its recognition by IF2 and preventing the misappropriation of this tRNA by the elongation apparatus. The polypeptide is Methionyl-tRNA formyltransferase (Chlorobium phaeobacteroides (strain DSM 266 / SMG 266 / 2430)).